The chain runs to 294 residues: UDP-3-O-acyl-N-acetylglucosamine deacetylase (294 aa).

Zn(2+) is bound by residues His-75, His-232, and Asp-236. His-259 functions as the Proton donor in the catalytic mechanism.

Belongs to the LpxC family. The cofactor is Zn(2+).

The enzyme catalyses a UDP-3-O-[(3R)-3-hydroxyacyl]-N-acetyl-alpha-D-glucosamine + H2O = a UDP-3-O-[(3R)-3-hydroxyacyl]-alpha-D-glucosamine + acetate. Its pathway is glycolipid biosynthesis; lipid IV(A) biosynthesis; lipid IV(A) from (3R)-3-hydroxytetradecanoyl-[acyl-carrier-protein] and UDP-N-acetyl-alpha-D-glucosamine: step 2/6. Functionally, catalyzes the hydrolysis of UDP-3-O-myristoyl-N-acetylglucosamine to form UDP-3-O-myristoylglucosamine and acetate, the committed step in lipid A biosynthesis. In Campylobacter lari (strain RM2100 / D67 / ATCC BAA-1060), this protein is UDP-3-O-acyl-N-acetylglucosamine deacetylase.